The primary structure comprises 571 residues: 15-cis-phytoene desaturase, chloroplastic/chromoplastic (571 aa).

A chloroplast and chromoplast-targeting transit peptide spans 1–96; that stretch reads MDTGCLSSMN…FRNSERPSKP (96 aa). FAD contacts are provided by residues Ala-107, 126–127, Lys-134, 151–152, and Tyr-157; these read EA and HI. Residue Arg-292 participates in substrate binding. Positions 334 and 523 each coordinate FAD. Residue Ala-531 participates in substrate binding. Met-533 contributes to the FAD binding site.

This sequence belongs to the carotenoid/retinoid oxidoreductase family. As to quaternary structure, homotetramer. It depends on FAD as a cofactor.

The protein localises to the plastid. It localises to the chloroplast. The protein resides in the chromoplast. It is found in the membrane. It carries out the reaction 2 a plastoquinone + 15-cis-phytoene = 9,9',15-tri-cis-zeta-carotene + 2 a plastoquinol. It participates in carotenoid biosynthesis; lycopene biosynthesis. Converts phytoene into zeta-carotene via the intermediary of phytofluene by the symmetrical introduction of two double bonds at the C-11 and C-11' positions of phytoene with a concomitant isomerization of two neighboring double bonds at the C9 and C9' positions from trans to cis. The polypeptide is 15-cis-phytoene desaturase, chloroplastic/chromoplastic (PDS1) (Zea mays (Maize)).